The chain runs to 352 residues: Uroporphyrinogen decarboxylase (352 aa).

Residues R27–R31, D77, Y154, T209, and H325 each bind substrate.

The protein belongs to the uroporphyrinogen decarboxylase family. As to quaternary structure, homodimer.

The protein resides in the cytoplasm. The enzyme catalyses uroporphyrinogen III + 4 H(+) = coproporphyrinogen III + 4 CO2. The protein operates within porphyrin-containing compound metabolism; protoporphyrin-IX biosynthesis; coproporphyrinogen-III from 5-aminolevulinate: step 4/4. In terms of biological role, catalyzes the decarboxylation of four acetate groups of uroporphyrinogen-III to yield coproporphyrinogen-III. The sequence is that of Uroporphyrinogen decarboxylase from Legionella pneumophila (strain Corby).